We begin with the raw amino-acid sequence, 328 residues long: UPF0194 membrane protein YPA_1093 (328 aa).

The first 22 residues, 1–22, serve as a signal peptide directing secretion; it reads MNRKKIIVAAVIVALLATLAYG. Coiled-coil stretches lie at residues 80 to 109 and 141 to 209; these read YLNA…REEE and KAVS…ILLA.

It belongs to the UPF0194 family.

It localises to the periplasm. This chain is UPF0194 membrane protein YPA_1093, found in Yersinia pestis bv. Antiqua (strain Antiqua).